The sequence spans 345 residues: Viral Fc-gamma receptor-like protein UL119 (345 aa).

The signal sequence occupies residues 1–23 (MCSVLAIALVVALLGDMHPGVKS). Positions 23–42 (SSTTSAVTSPSNTTVTSTTS) are disordered. Over 24-294 (STTSAVTSPS…KSDPLFEDRL (271 aa)) the chain is Virion surface. Residues asparagine 34, asparagine 48, asparagine 95, asparagine 104, asparagine 148, asparagine 179, asparagine 198, asparagine 217, asparagine 225, asparagine 241, asparagine 244, and asparagine 260 are each glycosylated (N-linked (GlcNAc...) asparagine; by host). The region spanning 91–190 (QVSLNATCKV…TWDLFTYPIY (100 aa)) is the Ig-like V-type domain. The helical transmembrane segment at 295–317 (LAYGVLAFLVFMVIILLYVTYML) threads the bilayer. Over 318-345 (ARRRDWSYKRLEEPVEEKKHPVPYFKQW) the chain is Intravirion.

It is found in the virion membrane. In terms of biological role, serves as a receptor for the Fc part of human IgG. May thus be involved in interfering with host Ig-mediated immune responses. The protein is Viral Fc-gamma receptor-like protein UL119 (UL119/UL118) of Human cytomegalovirus (strain AD169) (HHV-5).